The sequence spans 722 residues: Phenylalanine ammonia-lyase lenB (722 aa).

Y83 serves as the catalytic Proton donor/acceptor. Residues 117–136 are disordered; the sequence is LPTDRSSSRPSSRYPHGLRS. The segment at residues 190–192 is a cross-link (5-imidazolinone (Ala-Gly)); sequence ASG. At S191 the chain carries 2,3-didehydroalanine (Ser). Residues N247, Q334, R340, N370, K441, E469, and N472 each coordinate (E)-cinnamate.

The protein belongs to the PAL/histidase family. Post-translationally, contains an active site 4-methylidene-imidazol-5-one (MIO), which is formed autocatalytically by cyclization and dehydration of residues Ala-Ser-Gly.

The catalysed reaction is L-phenylalanine = (E)-cinnamate + NH4(+). Its pathway is alkaloid biosynthesis. In terms of biological role, phenylalanine ammonia-lyase; part of the gene cluster that mediates the biosynthesis of the ergot alkaloids lentopeptins A and B. Within the pathway, lenB provides the cinnamic acid starter unit for the synthesis of the N-acyldiketopiperazine intermediate by the NRPS lenA. Cinnamic acid is condensed with the Ala-Val-Ala peptide chain by lenA which leads to the N-acyldiketopiperazine intermediate which in turn is converted into lentopeptins A and B by the cytochrome P450 monooxygenase lenC. In Aspergillus lentulus, this protein is Phenylalanine ammonia-lyase lenB.